Reading from the N-terminus, the 353-residue chain is Photosystem II protein D1 (353 aa).

An N-acetylthreonine modification is found at T2. The residue at position 2 (T2) is a Phosphothreonine. The next 3 helical transmembrane spans lie at 29 to 46 (YIGW…TATS), 118 to 133 (HFLL…EWEL), and 142 to 156 (WIAV…AATA). Residue H118 participates in chlorophyll a binding. Y126 contributes to the pheophytin a binding site. [CaMn4O5] cluster-binding residues include D170 and E189. The chain crosses the membrane as a helical span at residues 197-218 (FHMLGVAGVFGGSLFSAMHGSL). H198 contributes to the chlorophyll a binding site. A quinone-binding positions include H215 and 264–265 (SF). H215 provides a ligand contact to Fe cation. H272 contributes to the Fe cation binding site. The helical transmembrane segment at 274–288 (FLAAWPVVGIWFTAL) threads the bilayer. H332, E333, D342, and A344 together coordinate [CaMn4O5] cluster. Residues 345 to 353 (AVEAPSTNG) constitute a propeptide that is removed on maturation.

This sequence belongs to the reaction center PufL/M/PsbA/D family. In terms of assembly, PSII is composed of 1 copy each of membrane proteins PsbA, PsbB, PsbC, PsbD, PsbE, PsbF, PsbH, PsbI, PsbJ, PsbK, PsbL, PsbM, PsbT, PsbX, PsbY, PsbZ, Psb30/Ycf12, at least 3 peripheral proteins of the oxygen-evolving complex and a large number of cofactors. It forms dimeric complexes. The D1/D2 heterodimer binds P680, chlorophylls that are the primary electron donor of PSII, and subsequent electron acceptors. It shares a non-heme iron and each subunit binds pheophytin, quinone, additional chlorophylls, carotenoids and lipids. D1 provides most of the ligands for the Mn4-Ca-O5 cluster of the oxygen-evolving complex (OEC). There is also a Cl(-1) ion associated with D1 and D2, which is required for oxygen evolution. The PSII complex binds additional chlorophylls, carotenoids and specific lipids. serves as cofactor. In terms of processing, tyr-161 forms a radical intermediate that is referred to as redox-active TyrZ, YZ or Y-Z. Post-translationally, C-terminally processed by CTPA; processing is essential to allow assembly of the oxygen-evolving complex and thus photosynthetic growth.

It localises to the plastid. It is found in the chloroplast thylakoid membrane. The enzyme catalyses 2 a plastoquinone + 4 hnu + 2 H2O = 2 a plastoquinol + O2. In terms of biological role, photosystem II (PSII) is a light-driven water:plastoquinone oxidoreductase that uses light energy to abstract electrons from H(2)O, generating O(2) and a proton gradient subsequently used for ATP formation. It consists of a core antenna complex that captures photons, and an electron transfer chain that converts photonic excitation into a charge separation. The D1/D2 (PsbA/PsbD) reaction center heterodimer binds P680, the primary electron donor of PSII as well as several subsequent electron acceptors. This is Photosystem II protein D1 from Ceratophyllum demersum (Rigid hornwort).